Consider the following 631-residue polypeptide: Phosphomethylpyrimidine synthase (631 aa).

Substrate is bound by residues Asn-239, Met-268, Tyr-297, His-333, 353–355 (SRG), 394–397 (DGLR), and Glu-433. His-437 provides a ligand contact to Zn(2+). Tyr-460 contributes to the substrate binding site. A Zn(2+)-binding site is contributed by His-501. [4Fe-4S] cluster is bound by residues Cys-581, Cys-584, and Cys-589.

This sequence belongs to the ThiC family. In terms of assembly, homodimer. [4Fe-4S] cluster is required as a cofactor.

It carries out the reaction 5-amino-1-(5-phospho-beta-D-ribosyl)imidazole + S-adenosyl-L-methionine = 4-amino-2-methyl-5-(phosphooxymethyl)pyrimidine + CO + 5'-deoxyadenosine + formate + L-methionine + 3 H(+). The protein operates within cofactor biosynthesis; thiamine diphosphate biosynthesis. Its function is as follows. Catalyzes the synthesis of the hydroxymethylpyrimidine phosphate (HMP-P) moiety of thiamine from aminoimidazole ribotide (AIR) in a radical S-adenosyl-L-methionine (SAM)-dependent reaction. This Escherichia coli (strain SMS-3-5 / SECEC) protein is Phosphomethylpyrimidine synthase.